The primary structure comprises 276 residues: ADP-dependent (S)-NAD(P)H-hydrate dehydratase (276 aa).

The region spanning 7 to 275 is the YjeF C-terminal domain; the sequence is TEEHVRATLP…DILPRVWKRF (269 aa). Positions 42, 104, and 149 each coordinate (6S)-NADPHX. AMP contacts are provided by residues 186-190 and Gly215; that span reads KGNQT. Asp216 is a binding site for (6S)-NADPHX.

Belongs to the NnrD/CARKD family. Homotetramer. The cofactor is Mg(2+).

The enzyme catalyses (6S)-NADHX + ADP = AMP + phosphate + NADH + H(+). It catalyses the reaction (6S)-NADPHX + ADP = AMP + phosphate + NADPH + H(+). In terms of biological role, catalyzes the dehydration of the S-form of NAD(P)HX at the expense of ADP, which is converted to AMP. Together with NAD(P)HX epimerase, which catalyzes the epimerization of the S- and R-forms, the enzyme allows the repair of both epimers of NAD(P)HX, a damaged form of NAD(P)H that is a result of enzymatic or heat-dependent hydration. The chain is ADP-dependent (S)-NAD(P)H-hydrate dehydratase from Bacillus subtilis (strain 168).